Consider the following 443-residue polypeptide: MNRTKIDKLITDYPLVKNLINLEEVTWFNPQATTLEKGLPYVGLSQQDVADAEARLQRFAPYLCQAFPETQKTKGIIESDIVAIPTMQNALQQRYGVAITGRLLLKKDSHLPISGSIKARGGIYEVLTHAEKLALQAGLLQETDDYSKLFSDDFRQFFRQYRIAVGSTGNLGMSIGIMSAKLGFSVSVHMSADAREWKKRKLREHGVNVVEYAQDYGVAVAQGRKQAESDPNCFFIDDENSPTLFLGYSVAGDRLKQQFAEQQIVVDENHPLFVYLPCGVGGGPGGVAFGLKLAFGDHVHCIFAEPTHSPCMLLGVYTGLHDGIAVQDIGIDNITAADGLAVGRASGFVGRAMEHLLDGFYTLSDAEMYDLLGLLNQYEGIRLEPSALAGMPGPARVSSSLDYLEQNHFSVEKMRNATHLVWATGGGMVPVEEMEKYLATAKI.

Lys-118 is modified (N6-(pyridoxal phosphate)lysine).

It belongs to the serine/threonine dehydratase family. DsdA subfamily. As to quaternary structure, monomer. It depends on pyridoxal 5'-phosphate as a cofactor.

The catalysed reaction is D-serine = pyruvate + NH4(+). In Yersinia enterocolitica serotype O:8 / biotype 1B (strain NCTC 13174 / 8081), this protein is D-serine dehydratase.